We begin with the raw amino-acid sequence, 300 residues long: MGAPKQKWTQEEESALKSGVIKHGPGKWRTILKDPEFSGVLYLRSNVDLKDKWRNMSVMANGWGSREKSRLAVKRTFSLPKQEENSLALTNSLQSDEENVDATSGLQVSSNPPPRRPNVRLDSLIMEAIATLKEPGGCNKTTIGAYIEDQYHAPPDFKRLLSTKLKYLTSCGKLVKVKRKYRIPNSTPLSSHRRKGLGVFGGKQRTSSLPSPKTDIDEVNFQTRSQIDTEIARMKSMNVHEAAAVAAQAVAEAEAAMAEAEEAAKEAEAAEAEAEAAQAFAEEASKTLKGRNICKMMIRA.

Residues 1 to 58 (MGAPKQKWTQEEESALKSGVIKHGPGKWRTILKDPEFSGVLYLRSNVDLKDKWRNMSV) enclose the HTH myb-type domain. Positions 28 to 57 (WRTILKDPEFSGVLYLRSNVDLKDKWRNMS) form a DNA-binding region, H-T-H motif. 2 disordered regions span residues 93 to 119 (LQSD…RPNV) and 185 to 213 (NSTP…PSPK). The H15 domain occupies 117–185 (PNVRLDSLIM…KVKRKYRIPN (69 aa)). The stretch at 241 to 290 (EAAAVAAQAVAEAEAAMAEAEEAAKEAEAAEAEAEAAQAFAEEASKTLKG) forms a coiled coil.

Belongs to the histone H1/H5 family. SMH subfamily. As to quaternary structure, forms a homodimer and heterodimers with TRB2 or TRB3. Interacts with POT1b, TRB2 and TRB3 through its H15 domain.

It localises to the nucleus. The protein localises to the nucleolus. It is found in the chromosome. Its function is as follows. Binds preferentially double-stranded telomeric repeats. The sequence is that of Telomere repeat-binding factor 1 (TRB1) from Arabidopsis thaliana (Mouse-ear cress).